Here is a 138-residue protein sequence, read N- to C-terminus: Ribosome maturation factor RimP (138 aa).

Belongs to the RimP family.

The protein resides in the cytoplasm. In terms of biological role, required for maturation of 30S ribosomal subunits. This chain is Ribosome maturation factor RimP, found in Campylobacter curvus (strain 525.92).